A 181-amino-acid chain; its full sequence is tRNA-splicing endonuclease (181 aa).

Residues tyrosine 118, histidine 126, and lysine 157 contribute to the active site.

This sequence belongs to the tRNA-intron endonuclease family. Archaeal short subfamily. As to quaternary structure, homotetramer; although the tetramer contains four active sites, only two participate in the cleavage. Therefore, it should be considered as a dimer of dimers.

It catalyses the reaction pretRNA = a 3'-half-tRNA molecule with a 5'-OH end + a 5'-half-tRNA molecule with a 2',3'-cyclic phosphate end + an intron with a 2',3'-cyclic phosphate and a 5'-hydroxyl terminus.. Its function is as follows. Endonuclease that removes tRNA introns. Cleaves pre-tRNA at the 5'- and 3'-splice sites to release the intron. The products are an intron and two tRNA half-molecules bearing 2',3' cyclic phosphate and 5'-OH termini. Recognizes a pseudosymmetric substrate in which 2 bulged loops of 3 bases are separated by a stem of 4 bp. In Sulfolobus acidocaldarius (strain ATCC 33909 / DSM 639 / JCM 8929 / NBRC 15157 / NCIMB 11770), this protein is tRNA-splicing endonuclease.